The primary structure comprises 679 residues: Glycine--tRNA ligase beta subunit (679 aa).

Belongs to the class-II aminoacyl-tRNA synthetase family. Tetramer of two alpha and two beta subunits.

The protein resides in the cytoplasm. The catalysed reaction is tRNA(Gly) + glycine + ATP = glycyl-tRNA(Gly) + AMP + diphosphate. This Streptococcus pyogenes serotype M4 (strain MGAS10750) protein is Glycine--tRNA ligase beta subunit.